The following is a 389-amino-acid chain: Urea transporter 1 (389 aa).

5 helical membrane passes run 53–73 (PVVLQFIDWILRGISQVVFVN), 91–110 (WWALTGWLGTVVSTLMALLL), 116–136 (LIASGLYGYNATLVGVLMAVF), 143–163 (FWWLLLPVCAMSMTCPIFSSA), and 173–193 (LPVFTLPFNMALSMYLSATGH). Asn211 carries an N-linked (GlcNAc...) asparagine glycan. Helical transmembrane passes span 242 to 262 (GGIFLGAILLSSPLMCLHAAI), 281 to 301 (IYFGLWGFNSSLACIAMGGMF), 310 to 330 (LLALGCALFTAYLGVGMANFM), and 333 to 353 (VGLPACTWPFCLATLLFLIMT).

It belongs to the urea transporter family. In terms of assembly, homotrimer; each subunit contains a pore through which urea permeates. Identified in a complex with STOM. Detected in erythrocytes (at protein level). Expressed in spleen erythroblasts and tumoral kidney.

It localises to the cell membrane. The protein localises to the basolateral cell membrane. It carries out the reaction urea(in) = urea(out). Its activity is regulated as follows. Inhibited by phloretin and para-chloromercuribenzene sulfonate. Functionally, mediates the transport of urea driven by a concentration gradient across the cell membrane of erythrocytes. Also mediates the transport of urea across the cell membrane of the renal inner medullary collecting duct which is critical to the urinary concentrating mechanism. Facilitates water transport in erythrocytes. The chain is Urea transporter 1 (SLC14A1) from Homo sapiens (Human).